Here is an 82-residue protein sequence, read N- to C-terminus: MSGTIPHFWAQPFRYIRWSAREKPAYFYSCVIAGLGPVFLTVVPPVRKYFGDVNPAPIPVTYPIPTGPRKQLTGYDDDTEEA.

A helical transmembrane segment spans residues 25-43 (AYFYSCVIAGLGPVFLTVV).

The protein belongs to the complex I NDUFA3 subunit family. Complex I is composed of about 40 different subunits.

Its subcellular location is the mitochondrion inner membrane. In terms of biological role, accessory subunit of the mitochondrial membrane respiratory chain NADH dehydrogenase (Complex I), that is believed not to be involved in catalysis. Complex I functions in the transfer of electrons from NADH to the respiratory chain. The immediate electron acceptor for the enzyme is believed to be ubiquinone. This subunit binds ubiquinone. This Neurospora crassa (strain ATCC 24698 / 74-OR23-1A / CBS 708.71 / DSM 1257 / FGSC 987) protein is NADH-ubiquinone oxidoreductase 9.5 kDa subunit (nuo9.5).